Reading from the N-terminus, the 770-residue chain is Multifunctional tryptophan biosynthesis protein (770 aa).

Residues 25–225 enclose the Glutamine amidotransferase type-1 domain; that stretch reads NVILIDNYDS…LKLTAGTWEG (201 aa). 76-78 contributes to the L-glutamine binding site; that stretch reads GPG. Cys-104 serves as the catalytic Nucleophile; for GATase activity. L-glutamine contacts are provided by residues Gln-108 and 154-155; that span reads SL. Residues His-199 and Glu-201 each act as for GATase activity in the active site. Positions 228–251 are disordered; the sequence is KHFGEQSSTTKATVPSNPPPKTDK. Polar residues predominate over residues 232–242; the sequence is EQSSTTKATVP. An indole-3-glycerol phosphate synthase region spans residues 255–519; sequence ILERIYDHRR…DTATFIAELL (265 aa). An N-(5'-phosphoribosyl)anthranilate isomerase region spans residues 535-770; sequence LVKICGTRSE…RAFVQAVRGL (236 aa).

The enzyme catalyses N-(5-phospho-beta-D-ribosyl)anthranilate = 1-(2-carboxyphenylamino)-1-deoxy-D-ribulose 5-phosphate. It catalyses the reaction 1-(2-carboxyphenylamino)-1-deoxy-D-ribulose 5-phosphate + H(+) = (1S,2R)-1-C-(indol-3-yl)glycerol 3-phosphate + CO2 + H2O. The catalysed reaction is chorismate + L-glutamine = anthranilate + pyruvate + L-glutamate + H(+). It participates in amino-acid biosynthesis; L-tryptophan biosynthesis; L-tryptophan from chorismate: step 1/5. It functions in the pathway amino-acid biosynthesis; L-tryptophan biosynthesis; L-tryptophan from chorismate: step 3/5. Its pathway is amino-acid biosynthesis; L-tryptophan biosynthesis; L-tryptophan from chorismate: step 4/5. Trifunctional enzyme bearing the Gln amidotransferase (GATase) domain of anthranilate synthase, indole-glycerolphosphate synthase, and phosphoribosylanthranilate isomerase activities. This is Multifunctional tryptophan biosynthesis protein (trpC) from Aspergillus niger.